The chain runs to 201 residues: FMN-dependent NADH:quinone oxidoreductase (201 aa).

Residues Ser-10, 16-18, 96-99, and 140-143 contribute to the FMN site; these read SQS, MYNF, and SRGG.

Belongs to the azoreductase type 1 family. Homodimer. FMN serves as cofactor.

The enzyme catalyses 2 a quinone + NADH + H(+) = 2 a 1,4-benzosemiquinone + NAD(+). It catalyses the reaction N,N-dimethyl-1,4-phenylenediamine + anthranilate + 2 NAD(+) = 2-(4-dimethylaminophenyl)diazenylbenzoate + 2 NADH + 2 H(+). In terms of biological role, quinone reductase that provides resistance to thiol-specific stress caused by electrophilic quinones. Also exhibits azoreductase activity. Catalyzes the reductive cleavage of the azo bond in aromatic azo compounds to the corresponding amines. The polypeptide is FMN-dependent NADH:quinone oxidoreductase (Salmonella choleraesuis (strain SC-B67)).